The following is a 442-amino-acid chain: Proline--tRNA ligase (442 aa).

It belongs to the class-II aminoacyl-tRNA synthetase family. ProS type 2 subfamily. Homodimer.

It is found in the cytoplasm. It catalyses the reaction tRNA(Pro) + L-proline + ATP = L-prolyl-tRNA(Pro) + AMP + diphosphate. Its function is as follows. Catalyzes the attachment of proline to tRNA(Pro) in a two-step reaction: proline is first activated by ATP to form Pro-AMP and then transferred to the acceptor end of tRNA(Pro). The chain is Proline--tRNA ligase from Mesorhizobium japonicum (strain LMG 29417 / CECT 9101 / MAFF 303099) (Mesorhizobium loti (strain MAFF 303099)).